A 504-amino-acid polypeptide reads, in one-letter code: Maturase K (504 aa).

This sequence belongs to the intron maturase 2 family. MatK subfamily.

Its subcellular location is the plastid. It is found in the chloroplast. Its function is as follows. Usually encoded in the trnK tRNA gene intron. Probably assists in splicing its own and other chloroplast group II introns. The protein is Maturase K of Cynophalla hastata (Broadleaf caper).